The following is a 99-amino-acid chain: Aphid transmission protein (99 aa).

This sequence belongs to the caulimoviridae ORF II family.

This protein is involved in virus transmission. In Cauliflower mosaic virus (strain W260) (CaMV), this protein is Aphid transmission protein.